The chain runs to 526 residues: Medium/long-chain-fatty-acid--[acyl-carrier-protein] ligase MbtM (526 aa).

An N6-acetyllysine; by Pat mark is found at Lys-260 and Lys-511.

The protein belongs to the ATP-dependent AMP-binding enzyme family. Acetylated on Lys-511 and Lys-260 by Pat. Lys-511 is the major acetylation site. Acetylation results in the inactivation of the enzyme.

It catalyses the reaction a long-chain fatty acid + holo-[ACP] + ATP = a long-chain fatty acyl-[ACP] + AMP + diphosphate. The enzyme catalyses a medium-chain fatty acid + holo-[ACP] + ATP = a medium-chain fatty acyl-[ACP] + AMP + diphosphate. It carries out the reaction hexadecanoate + holo-[ACP] + ATP = hexadecanoyl-[ACP] + AMP + diphosphate. The catalysed reaction is hexadecanoate + ATP + H(+) = hexadecanoyl-AMP + diphosphate. It catalyses the reaction hexadecanoyl-AMP + holo-[ACP] = hexadecanoyl-[ACP] + AMP + H(+). The enzyme catalyses dodecanoate + holo-[ACP] + ATP = dodecanoyl-[ACP] + AMP + diphosphate. It carries out the reaction dodecanoate + ATP + H(+) = dodecanoyl-AMP + diphosphate. The catalysed reaction is dodecanoyl-AMP + holo-[ACP] = dodecanoyl-[ACP] + AMP + H(+). Its pathway is siderophore biosynthesis; mycobactin biosynthesis. Its activity is regulated as follows. Reversibly inactivated by post-translational acetylation by Pat in a cAMP-dependent manner and reactivated by Sir2 deacylase. Its function is as follows. Activates lipidic moieties required for mycobactin biosynthesis. Converts medium- to long-chain aliphatic fatty acids into acyl adenylate, which is further transferred on to the phosphopantetheine arm of the carrier protein MbtL. Shows a strong preference for palmitic acid (C16) and cannot use short-chain fatty acids. Proceeds via a Bi Uni Uni Bi ping-pong mechanism. During the first half-reaction (adenylation), fatty acid binds first to the free enzyme, followed by ATP and the release of pyrophosphate to form the adenylate intermediate. During the second half-reaction (ligation), holo-MbtL binds to the enzyme followed by the release of products AMP and acylated MbtL. The protein is Medium/long-chain-fatty-acid--[acyl-carrier-protein] ligase MbtM of Mycolicibacterium smegmatis (strain ATCC 700084 / mc(2)155) (Mycobacterium smegmatis).